A 448-amino-acid chain; its full sequence is MSHGLSPRPATAKKSADLKGTVRIPGDKSISHRSFMFGGLASGETRITGLLEGEDVINTGKAMQAMGAKIRKEGDTWIINGVGNGALLAPEAPLDFGNAGTGCRLTMGLVGVYDFDSTFIGDASLTKRPMGRVLDPLREMGVQVKSAEGDRLPVTLRGPKTPNPITYRVPMASAQVKSAVLLAGLNTPGITTVIEPVMTRDHTEKMLQGFGANLSVETDTAGVRTIRLEGRGKLTGQVIDVPGDPSSTAFPLVAALLVPGSDVTILNVLMNPTRTGLILTLQEMGANIEVMNPRLAGGEDVADLRVRYSELKGVTVPEERAPSMIDEYPVLAVAAAFAEGATVMNGLDELRVKESDRLSAVADGLKLNGVDCDEGEASLVVRGRPGGKGLGNAAGGQVKTHLDHRIAMSFLVLGLASEHPVTVDDATMIATSFPEFMDLMTGLGATIE.

Residues K28, S29, and R33 each coordinate 3-phosphoshikimate. A phosphoenolpyruvate-binding site is contributed by K28. Phosphoenolpyruvate contacts are provided by G100 and R128. 3-phosphoshikimate-binding residues include S173, Q175, D326, and K353. Q175 provides a ligand contact to phosphoenolpyruvate. Residue D326 is the Proton acceptor of the active site. R357 and R405 together coordinate phosphoenolpyruvate.

Belongs to the EPSP synthase family. Monomer.

It is found in the cytoplasm. It carries out the reaction 3-phosphoshikimate + phosphoenolpyruvate = 5-O-(1-carboxyvinyl)-3-phosphoshikimate + phosphate. Its pathway is metabolic intermediate biosynthesis; chorismate biosynthesis; chorismate from D-erythrose 4-phosphate and phosphoenolpyruvate: step 6/7. Its function is as follows. Catalyzes the transfer of the enolpyruvyl moiety of phosphoenolpyruvate (PEP) to the 5-hydroxyl of shikimate-3-phosphate (S3P) to produce enolpyruvyl shikimate-3-phosphate and inorganic phosphate. This Sinorhizobium fredii (strain NBRC 101917 / NGR234) protein is 3-phosphoshikimate 1-carboxyvinyltransferase.